Consider the following 169-residue polypeptide: Alpha-S2-casein-like B (169 aa).

The N-terminal stretch at 1–15 (MKFIILTCLLAVALA) is a signal peptide.

The protein belongs to the alpha-casein family. As to expression, mammary gland specific. Secreted in milk.

It localises to the secreted. Its function is as follows. Important role in the capacity of milk to transport calcium phosphate. The sequence is that of Alpha-S2-casein-like B (Csn1s2b) from Rattus norvegicus (Rat).